The primary structure comprises 908 residues: Metabotropic glutamate receptor 8 (908 aa).

An N-terminal signal peptide occupies residues 1–33 (MVCEGKRSTSCPCFFLLTAKFYWILTMMQRTHS). Topologically, residues 34-583 (QEYAHSIRLD…IIKLEWHSPW (550 aa)) are extracellular. Cysteine 64 and cysteine 106 are joined by a disulfide. Asparagine 95 carries an N-linked (GlcNAc...) asparagine glycan. L-glutamate is bound by residues serine 156, 177-179 (AST), and tyrosine 227. Intrachain disulfides connect cysteine 246-cysteine 534, cysteine 369-cysteine 384, cysteine 424-cysteine 431, cysteine 516-cysteine 535, cysteine 520-cysteine 538, cysteine 541-cysteine 553, and cysteine 556-cysteine 569. An N-linked (GlcNAc...) asparagine glycan is attached at asparagine 298. An L-glutamate-binding site is contributed by aspartate 309. An L-glutamate-binding site is contributed by lysine 401. 2 N-linked (GlcNAc...) asparagine glycosylation sites follow: asparagine 452 and asparagine 480. A glycan (N-linked (GlcNAc...) asparagine) is linked at asparagine 565. Residues 584–608 (AVVPVFIAILGIIATTFVIVTFVRY) traverse the membrane as a helical segment. Topologically, residues 609–620 (NDTPIVRASGRE) are cytoplasmic. The chain crosses the membrane as a helical span at residues 621–641 (LSYVLLTGIFLCYSITFLMIA). The Extracellular portion of the chain corresponds to 642–647 (APDTII). Residues 648–668 (CSFRRIFLGLGMCFSYAALLT) traverse the membrane as a helical segment. Over 669–695 (KTNRIHRIFEQGKKSVTAPKFISPASQ) the chain is Cytoplasmic. A helical membrane pass occupies residues 696-716 (LVITFSLISVQLLGVFVWFVV). Topologically, residues 717 to 746 (DPPHTIIDYGEQRTLDPENARGVLKCDISD) are extracellular. A helical membrane pass occupies residues 747-768 (LSLICSLGYSILLMVTCTVYAI). Residues 769–781 (KTRGVPETFNEAK) lie on the Cytoplasmic side of the membrane. Residues 782 to 803 (PIGFTMYTTCIIWLAFIPIFFG) form a helical membrane-spanning segment. The Extracellular segment spans residues 804-818 (TAQSAEKMYIQTTTL). A helical membrane pass occupies residues 819–843 (TVSMSLSASVSLGMLYMPKVYIIIF). The Cytoplasmic segment spans residues 844–908 (HPEQNVQKRK…TYISYSNHSI (65 aa)). Residue lysine 882 forms a Glycyl lysine isopeptide (Lys-Gly) (interchain with G-Cter in SUMO1) linkage.

This sequence belongs to the G-protein coupled receptor 3 family. As to quaternary structure, interacts with PICK1. Strongly expressed in olfactory bulb, accessory olfactory bulb, and mammillary body. Weaker expression in the retina, and in scattered cells in the cortex and hindbrain.

It is found in the cell membrane. Functionally, G-protein coupled receptor for glutamate. Ligand binding causes a conformation change that triggers signaling via guanine nucleotide-binding proteins (G proteins) and modulates the activity of down-stream effectors. Signaling inhibits adenylate cyclase activity. The protein is Metabotropic glutamate receptor 8 (Grm8) of Mus musculus (Mouse).